The chain runs to 433 residues: Protein arginine N-methyltransferase 2 (433 aa).

Residues 1-20 form a disordered region; sequence MATSGDCPRSESQGEEPAEC. Interaction with ESR1 regions lie at residues 1–277 and 133–275; these read MATS…SALK and KESL…NLSA. The SH3 domain occupies 30 to 89; that stretch reads VQPEEFVAIADYAATDETQLSFLRGEKILILRQTTADWWWGERAGCCGYIPANHVGKHVD. Asymmetric dimethylarginine occurs at positions 61 and 72. Residues 83–207 are interaction with RB1; it reads HVGKHVDEYD…DVVLPEKVDV (125 aa). An SAM-dependent MTase PRMT-type domain is found at 99-432; that stretch reads DEEYFGSYGT…KVGEKVFPIW (334 aa). The S-adenosyl-L-methionine site is built by His-112, Arg-121, Gly-145, Glu-168, and Glu-197. Active-site residues include Glu-211 and Glu-220.

Belongs to the class I-like SAM-binding methyltransferase superfamily. Protein arginine N-methyltransferase family. As to quaternary structure, self-associates. Interacts with RB1 and E2F1. Interacts with NCOA6 coactivator. Interacts (via SH3 domain) with PRMT8. Interacts with AR. Interacts with NFKBIA. Interacts with ESR1, ESR2, PGR, PPARG, RARA, RXRA and THRB. Interacts with HNRNPUL1. In terms of tissue distribution, widely expressed. Highly expressed in androgen target organs such as heart, prostate, skeletal muscle, ovary and spinal cord.

The protein resides in the cytoplasm. The protein localises to the nucleus. Its subcellular location is the nucleolus. The catalysed reaction is L-arginyl-[protein] + 2 S-adenosyl-L-methionine = N(omega),N(omega)-dimethyl-L-arginyl-[protein] + 2 S-adenosyl-L-homocysteine + 2 H(+). Its function is as follows. Arginine methyltransferase that methylates the guanidino nitrogens of arginyl residues in proteins such as STAT3, FBL, histone H4. Acts as a coactivator (with NCOA2) of the androgen receptor (AR)-mediated transactivation. Acts as a coactivator (with estrogen) of estrogen receptor (ER)-mediated transactivation. Enhances PGR, PPARG, RARA-mediated transactivation. May inhibit NF-kappa-B transcription and promote apoptosis. Represses E2F1 transcriptional activity (in a RB1-dependent manner). May be involved in growth regulation. This Homo sapiens (Human) protein is Protein arginine N-methyltransferase 2 (PRMT2).